The sequence spans 309 residues: MGNKIRTTVLLAAMTALMMIIGQMLGGRQGMMIALIFAGVMNFASYWYSDKIVLKMYQAREITPESAHGLYAIVQRLVQRANLPMPRIFIIPQDTPNAFATGRNPDHAVVAVTEGLLNLLDEQEITGVLAHELAHVKNRDILIGTIAATMAGAIMMLASMARWGAIFGGTRSSDDEGGSSVIGLIALSIIAPMAAMVIQMAISRSREYLADATGAAISGNPEGLASALEKLGTYSKQIPMRANPSTAHIFTVSPLSGTTLMNLFSTHPPLESRIARLRHGSDSGTGNRDSSIRRRNMNTEAKAAWDRLR.

Transmembrane regions (helical) follow at residues 7-27 (TTVL…MLGG) and 29-49 (QGMM…YWYS). Residue H131 participates in Zn(2+) binding. E132 is a catalytic residue. H135 lines the Zn(2+) pocket. 2 helical membrane-spanning segments follow: residues 141-161 (ILIG…ASMA) and 182-202 (IGLI…QMAI). E207 contributes to the Zn(2+) binding site. Residues 278–309 (RHGSDSGTGNRDSSIRRRNMNTEAKAAWDRLR) form a disordered region.

This sequence belongs to the peptidase M48B family. It depends on Zn(2+) as a cofactor.

It localises to the cell inner membrane. In Desulforapulum autotrophicum (strain ATCC 43914 / DSM 3382 / VKM B-1955 / HRM2) (Desulfobacterium autotrophicum), this protein is Protease HtpX homolog.